We begin with the raw amino-acid sequence, 115 residues long: Urease subunit beta (115 aa).

The protein belongs to the urease beta subunit family. Heterotrimer of UreA (gamma), UreB (beta) and UreC (alpha) subunits. Three heterotrimers associate to form the active enzyme.

It localises to the cytoplasm. It carries out the reaction urea + 2 H2O + H(+) = hydrogencarbonate + 2 NH4(+). The protein operates within nitrogen metabolism; urea degradation; CO(2) and NH(3) from urea (urease route): step 1/1. The sequence is that of Urease subunit beta from Arthrobacter sp. (strain FB24).